Here is a 362-residue protein sequence, read N- to C-terminus: N-acylethanolamine-hydrolyzing acid amidase (362 aa).

Positions 1–33 are cleaved as a signal peptide; the sequence is MGTPAIRAACHGAHLALALLLLLSLSDPWLWAT. Residues Asn42 and Asn112 are each glycosylated (N-linked (GlcNAc...) asparagine). Cys131 serves as the catalytic Nucleophile. N-linked (GlcNAc...) asparagine glycosylation is found at Asn314 and Asn338.

This sequence belongs to the acid ceramidase family. As to quaternary structure, heterodimer of an alpha and a beta subunit, produced by autocatalytic cleavage. Post-translationally, N-glycosylated. Tunicamycin treatment causes a reduction in specific activity against N-palmitoylethanolamine. In terms of processing, autoproteolytic cleavage at pH 4.5 gives rise to the alpha and beta subunit. Cleavage gives rise to a conformation change that activates the enzyme. The same catalytic Cys residue mediates the autoproteolytic cleavage and subsequent hydrolysis of lipid substrates. Expressed in brain, cecum, colon, heart, ileum, kidney, liver, lung, spleen, stomach, submaxillary gland, testis and thymus.

It localises to the lysosome. It is found in the membrane. It carries out the reaction N-hexadecanoylethanolamine + H2O = ethanolamine + hexadecanoate. The catalysed reaction is an N-(long-chain fatty acyl)ethanolamine + H2O = a long-chain fatty acid + ethanolamine. The enzyme catalyses N-dodecanoylethanolamine + H2O = dodecanoate + ethanolamine. It catalyses the reaction N-tetradecanoylethanolamine + H2O = tetradecanoate + ethanolamine. It carries out the reaction an N-acylsphing-4-enine + H2O = sphing-4-enine + a fatty acid. The catalysed reaction is N-hexadecanoylsphing-4-enine + H2O = sphing-4-enine + hexadecanoate. The enzyme catalyses N-dodecanoylsphing-4-enine + H2O = dodecanoate + sphing-4-enine. The protein operates within lipid metabolism; fatty acid metabolism. Stimulated by DTT. Stimulated by nonionic detergent of the polyoxyethylenep-t-octylphenylether type (Triton X-100 or Nonidet P-40) whereas 3-[(3-cholamidopropyl)dimethylammonio]propane-1-sulfonate (CHAPS) and octyl alpha-D-glucopyranoside decrease the N-(long-chain-acyl)ethanolamine deacylase activity. Polysorbate 20 (Tween 20) is inhibitory. Stimulated by endogenous phospholipids such as choline- or ethanolamine-containing phospholipids, and dihydrolipoic acid. Its function is as follows. Degrades bioactive fatty acid amides to their corresponding acids, with the following preference: N-palmitoylethanolamine &gt; N-myristoylethanolamine &gt; N-stearoylethanolamine &gt; N-oleoylethanolamine &gt; N-linoleoylethanolamine &gt; N-arachidonoylethanolamine. This is N-acylethanolamine-hydrolyzing acid amidase from Rattus norvegicus (Rat).